A 166-amino-acid polypeptide reads, in one-letter code: Interferon gamma (166 aa).

A signal peptide spans methionine 1–serine 23. Glutamine 24 carries the pyrrolidone carboxylic acid modification. Asparagine 39, asparagine 44, and asparagine 106 each carry an N-linked (GlcNAc...) asparagine glycan.

Belongs to the type II (or gamma) interferon family. As to quaternary structure, homodimer. As to expression, released primarily from activated T lymphocytes.

The protein resides in the secreted. Its function is as follows. Produced by lymphocytes activated by specific antigens or mitogens. IFN-gamma, in addition to having antiviral activity, has important immunoregulatory functions. It is a potent activator of macrophages, it has antiproliferative effects on transformed cells and it can potentiate the antiviral and antitumor effects of the type I interferons. This is Interferon gamma (IFNG) from Marmota monax (Woodchuck).